The sequence spans 188 residues: Aspartic protease inhibitor 11 (188 aa).

N19 is a glycosylation site (N-linked (GlcNAc...) asparagine). 3 cysteine pairs are disulfide-bonded: C48–C93, C142–C159, and C150–C153.

This sequence belongs to the protease inhibitor I3 (leguminous Kunitz-type inhibitor) family.

The protein resides in the vacuole. Its function is as follows. Inhibitor of cathepsin D (aspartic protease) and trypsin (serine protease). May protect the plant by inhibiting proteases of invading organisms. The polypeptide is Aspartic protease inhibitor 11 (Solanum tuberosum (Potato)).